Here is a 200-residue protein sequence, read N- to C-terminus: Recombination protein RecR (200 aa).

A C4-type zinc finger spans residues 59 to 74 (CGTCGSLDVTDPCAVC). One can recognise a Toprim domain in the interval 82–177 (RLLCVVEEVG…PVTMLARGVP (96 aa)).

It belongs to the RecR family.

Its function is as follows. May play a role in DNA repair. It seems to be involved in an RecBC-independent recombinational process of DNA repair. It may act with RecF and RecO. The sequence is that of Recombination protein RecR from Caulobacter vibrioides (strain ATCC 19089 / CIP 103742 / CB 15) (Caulobacter crescentus).